Reading from the N-terminus, the 879-residue chain is MKMLTRLQILMLALFSKGFLLSLGDHNFMRREIKIEGDLVLGGLFPINEKGTGTEECGRINEDRGIQRLEAMLFAIDEINKDNYLLPGVKLGVHILDTCSRDTYALEQSLEFVRASLTKVDEAEYMCPDGSYAIQENIPLLIAGVIGGSYSSVSIQVANLLRLFQIPQISYASTSAKLSDKSRYDYFARTVPPDFYQAKAMAEILRFFNWTYVSTVASEGDYGETGIEAFEQEARLRNICIATAEKVGRSNIRKSYDSVIRELLQKPNARVVVLFMRSDDSRELIAAANRVNASFTWVASDGWGAQESIVKGSEHVAYGAITLELASHPVRQFDRYFQSLNPYNNHRNPWFRDFWEQKFQCSLQNKRNHRQVCDKHLAIDSSNYEQESKIMFVVNAVYAMAHALHKMQRTLCPNTTKLCDAMKILDGKKLYKEYLLKINFTAPFNPNKGADSIVKFDTFGDGMGRYNVFNLQQTGGKYSYLKVGHWAETLSLDVDSIHWSRNSVPTSQCSDPCAPNEMKNMQPGDVCCWICIPCEPYEYLVDEFTCMDCGPGQWPTADLSGCYNLPEDYIKWEDAWAIGPVTIACLGFLCTCIVITVFIKHNNTPLVKASGRELCYILLFGVSLSYCMTFFFIAKPSPVICALRRLGLGTSFAICYSALLTKTNCIARIFDGVKNGAQRPKFISPSSQVFICLGLILVQIVMVSVWLILETPGTRRYTLPEKRETVILKCNVKDSSMLISLTYDVVLVILCTVYAFKTRKCPENFNEAKFIGFTMYTTCIIWLAFLPIFYVTSSDYRVQTTTMCISVSLSGFVVLGCLFAPKVHIVLFQPQKNVVTHRLHLNRFSVSGTATTYSQSSASTYVPTVCNGREVLDSTTSSL.

Positions M1–S22 are cleaved as a signal peptide. At L23–W576 the chain is on the extracellular side. A disulfide bridge connects residues C57 and C99. Residues R68, S151, and A172–T174 contribute to the L-glutamate site. N-linked (GlcNAc...) asparagine glycosylation is present at N209. Residue Y222 participates in L-glutamate binding. Disulfide bonds link C240–C527, C361–C373, C412–C419, C509–C528, C513–C531, C534–C546, and C549–C562. N-linked (GlcNAc...) asparagine glycosylation is present at N292. Residue D301 coordinates L-glutamate. K389 serves as a coordination point for L-glutamate. N414 and N439 each carry an N-linked (GlcNAc...) asparagine glycan. The chain crosses the membrane as a helical span at residues A577–I599. The Cytoplasmic segment spans residues K600–E613. Residues L614 to A634 traverse the membrane as a helical segment. At K635 to R645 the chain is on the extracellular side. The chain crosses the membrane as a helical span at residues L646–N664. Topologically, residues C665 to Q688 are cytoplasmic. Residues V689 to L709 form a helical membrane-spanning segment. At E710–D734 the chain is on the extracellular side. Residues S735–F756 form a helical membrane-spanning segment. Residues K757–K769 are Cytoplasmic-facing. A helical transmembrane segment spans residues F770–T792. At S793–T802 the chain is on the extracellular side. The helical transmembrane segment at M803 to F828 threads the bilayer. At Q829 to L879 the chain is on the cytoplasmic side.

This sequence belongs to the G-protein coupled receptor 3 family. As to quaternary structure, interacts with TAMALIN. As to expression, is widely distributed in the CNS. Predominant expression is seen in the neuronal cells of the cerebral cortex, dentate gyrus, and glial cells throughout brain regions.

It localises to the cell membrane. Functionally, G-protein coupled receptor for glutamate. Ligand binding causes a conformation change that triggers signaling via guanine nucleotide-binding proteins (G proteins) and modulates the activity of down-stream effectors. Signaling inhibits adenylate cyclase activity. In Rattus norvegicus (Rat), this protein is Metabotropic glutamate receptor 3 (Grm3).